Here is a 497-residue protein sequence, read N- to C-terminus: Taxane 10-beta-hydroxylase (497 aa).

Heme is bound at residue cysteine 443.

The protein belongs to the cytochrome P450 family. Heme is required as a cofactor.

It catalyses the reaction taxa-4(20),11-dien-5alpha-yl acetate + reduced [NADPH--hemoprotein reductase] + O2 = 10beta-hydroxytaxa-4(20),11-dien-5alpha-yl acetate + oxidized [NADPH--hemoprotein reductase] + H2O + H(+). It participates in alkaloid biosynthesis; taxol biosynthesis; 10-deacetyl-2-debenzoylbaccatin III from taxa-4(20),11-dien-5alpha-ol: step 2/3. In terms of biological role, involved in the transformation of a taxadienyl acetate by hydroxylation at C10 to yield taxadien-5-alpha-acetoxy-10-beta-ol. The protein is Taxane 10-beta-hydroxylase (CYP725A1) of Taxus cuspidata (Japanese yew).